Consider the following 95-residue polypeptide: Oxytetracycline polyketide synthase acyl carrier protein (95 aa).

In terms of domain architecture, Carrier spans 3–81; sequence LLTLSDLLTL…ALIEMTNASL (79 aa). Ser41 carries the post-translational modification O-(pantetheine 4'-phosphoryl)serine.

In terms of processing, 4'-phosphopantetheine is transferred from CoA to a specific serine of the apo-ACP-like protein.

It functions in the pathway antibiotic biosynthesis; oxytetracycline biosynthesis. Acyl carrier protein. The sequence is that of Oxytetracycline polyketide synthase acyl carrier protein from Streptomyces rimosus.